Consider the following 346-residue polypeptide: DNA primase small subunit PriS (346 aa).

Residues Asp-97, Asp-99, and Asp-280 contribute to the active site.

Belongs to the eukaryotic-type primase small subunit family. In terms of assembly, heterodimer of a small subunit (PriS) and a large subunit (PriL). Mg(2+) is required as a cofactor. Requires Mn(2+) as cofactor.

Its function is as follows. Catalytic subunit of DNA primase, an RNA polymerase that catalyzes the synthesis of short RNA molecules used as primers for DNA polymerase during DNA replication. The small subunit contains the primase catalytic core and has DNA synthesis activity on its own. Binding to the large subunit stabilizes and modulates the activity, increasing the rate of DNA synthesis while decreasing the length of the DNA fragments, and conferring RNA synthesis capability. The DNA polymerase activity may enable DNA primase to also catalyze primer extension after primer synthesis. May also play a role in DNA repair. The sequence is that of DNA primase small subunit PriS from Thermococcus kodakarensis (strain ATCC BAA-918 / JCM 12380 / KOD1) (Pyrococcus kodakaraensis (strain KOD1)).